The primary structure comprises 428 residues: Serine--tRNA ligase (428 aa).

An L-serine-binding site is contributed by 235–237 (TAE). 266–268 (RSE) contacts ATP. Residue E289 coordinates L-serine. 353–356 (EISS) serves as a coordination point for ATP. S389 lines the L-serine pocket.

It belongs to the class-II aminoacyl-tRNA synthetase family. Type-1 seryl-tRNA synthetase subfamily. In terms of assembly, homodimer. The tRNA molecule binds across the dimer.

It is found in the cytoplasm. It catalyses the reaction tRNA(Ser) + L-serine + ATP = L-seryl-tRNA(Ser) + AMP + diphosphate + H(+). The enzyme catalyses tRNA(Sec) + L-serine + ATP = L-seryl-tRNA(Sec) + AMP + diphosphate + H(+). It participates in aminoacyl-tRNA biosynthesis; selenocysteinyl-tRNA(Sec) biosynthesis; L-seryl-tRNA(Sec) from L-serine and tRNA(Sec): step 1/1. Its function is as follows. Catalyzes the attachment of serine to tRNA(Ser). Is also able to aminoacylate tRNA(Sec) with serine, to form the misacylated tRNA L-seryl-tRNA(Sec), which will be further converted into selenocysteinyl-tRNA(Sec). In Shewanella amazonensis (strain ATCC BAA-1098 / SB2B), this protein is Serine--tRNA ligase.